Consider the following 365-residue polypeptide: Cytochrome P450 71A3 (365 aa).

Belongs to the cytochrome P450 family. Heme is required as a cofactor.

Functionally, may have a role in maturation, such as during flavor formation or other metabolite production specific to aging tissues. This is Cytochrome P450 71A3 (CYP71A3) from Solanum melongena (Eggplant).